The chain runs to 515 residues: Maturase K (515 aa).

It belongs to the intron maturase 2 family. MatK subfamily.

The protein resides in the plastid. It localises to the chloroplast. Usually encoded in the trnK tRNA gene intron. Probably assists in splicing its own and other chloroplast group II introns. The sequence is that of Maturase K from Alpinia zerumbet (Shell ginger).